Here is a 208-residue protein sequence, read N- to C-terminus: Uracil phosphoribosyltransferase (208 aa).

5-phospho-alpha-D-ribose 1-diphosphate is bound by residues Arg78, Arg103, and 130–138; that span reads DPMLATANS. Uracil contacts are provided by residues Ile193 and 198-200; that span reads GDA. Asp199 serves as a coordination point for 5-phospho-alpha-D-ribose 1-diphosphate.

The protein belongs to the UPRTase family. The cofactor is Mg(2+).

The catalysed reaction is UMP + diphosphate = 5-phospho-alpha-D-ribose 1-diphosphate + uracil. It participates in pyrimidine metabolism; UMP biosynthesis via salvage pathway; UMP from uracil: step 1/1. Its activity is regulated as follows. Allosterically activated by GTP. Functionally, catalyzes the conversion of uracil and 5-phospho-alpha-D-ribose 1-diphosphate (PRPP) to UMP and diphosphate. The polypeptide is Uracil phosphoribosyltransferase (Brucella abortus biovar 1 (strain 9-941)).